The chain runs to 436 residues: Adenosylmethionine-8-amino-7-oxononanoate aminotransferase (436 aa).

Trp66 is a substrate binding site. Position 126–127 (126–127 (GS)) interacts with pyridoxal 5'-phosphate. Residue Tyr159 coordinates substrate. Asp256 lines the pyridoxal 5'-phosphate pocket. Lys285 and Gly318 together coordinate substrate. Lys285 carries the N6-(pyridoxal phosphate)lysine modification. 319–320 (PT) contributes to the pyridoxal 5'-phosphate binding site. A substrate-binding site is contributed by Arg402.

It belongs to the class-III pyridoxal-phosphate-dependent aminotransferase family. BioA subfamily. Homodimer. The cofactor is pyridoxal 5'-phosphate.

Its subcellular location is the cytoplasm. It carries out the reaction (8S)-8-amino-7-oxononanoate + S-adenosyl-L-methionine = S-adenosyl-4-methylsulfanyl-2-oxobutanoate + (7R,8S)-7,8-diammoniononanoate. It functions in the pathway cofactor biosynthesis; biotin biosynthesis; 7,8-diaminononanoate from 8-amino-7-oxononanoate (SAM route): step 1/1. Catalyzes the transfer of the alpha-amino group from S-adenosyl-L-methionine (SAM) to 7-keto-8-aminopelargonic acid (KAPA) to form 7,8-diaminopelargonic acid (DAPA). It is the only aminotransferase known to utilize SAM as an amino donor. The chain is Adenosylmethionine-8-amino-7-oxononanoate aminotransferase from Mycobacterium leprae (strain TN).